Here is a 359-residue protein sequence, read N- to C-terminus: Alanine racemase, biosynthetic (359 aa).

The active-site Proton acceptor; specific for D-alanine is Lys34. The residue at position 34 (Lys34) is an N6-(pyridoxal phosphate)lysine. Arg129 is a substrate binding site. The active-site Proton acceptor; specific for L-alanine is Tyr255. Met303 is a binding site for substrate.

It belongs to the alanine racemase family. The cofactor is pyridoxal 5'-phosphate.

It carries out the reaction L-alanine = D-alanine. Its pathway is amino-acid biosynthesis; D-alanine biosynthesis; D-alanine from L-alanine: step 1/1. It functions in the pathway cell wall biogenesis; peptidoglycan biosynthesis. Functionally, catalyzes the interconversion of L-alanine and D-alanine. Provides the D-alanine required for cell wall biosynthesis. The protein is Alanine racemase, biosynthetic (alr) of Escherichia coli O157:H7.